We begin with the raw amino-acid sequence, 891 residues long: Alanine--tRNA ligase (891 aa).

Zn(2+) contacts are provided by H569, H573, C671, and H675.

It belongs to the class-II aminoacyl-tRNA synthetase family. As to quaternary structure, homotetramer. It depends on Zn(2+) as a cofactor.

It localises to the cytoplasm. It carries out the reaction tRNA(Ala) + L-alanine + ATP = L-alanyl-tRNA(Ala) + AMP + diphosphate. In terms of biological role, catalyzes the attachment of alanine to tRNA(Ala) in a two-step reaction: alanine is first activated by ATP to form Ala-AMP and then transferred to the acceptor end of tRNA(Ala). Also edits incorrectly charged Ser-tRNA(Ala) and Gly-tRNA(Ala) via its editing domain. The polypeptide is Alanine--tRNA ligase (Blochmanniella floridana).